The sequence spans 310 residues: 4-hydroxyproline 2-epimerase (310 aa).

Cysteine 88 functions as the Proton acceptor in the catalytic mechanism. Substrate is bound by residues 89-90 (GH), histidine 208, and aspartate 232. Cysteine 236 acts as the Proton donor in catalysis. 237–238 (GT) serves as a coordination point for substrate.

This sequence belongs to the proline racemase family.

The catalysed reaction is trans-4-hydroxy-L-proline = cis-4-hydroxy-D-proline. In terms of biological role, catalyzes the epimerization of trans-4-hydroxy-L-proline (t4LHyp) to cis-4-hydroxy-D-proline (c4DHyp). Is likely involved in a degradation pathway that converts t4LHyp to alpha-ketoglutarate. Displays no proline racemase activity. The protein is 4-hydroxyproline 2-epimerase of Pseudomonas fluorescens (strain ATCC BAA-477 / NRRL B-23932 / Pf-5).